The chain runs to 240 residues: MGMTPRRKRRGGAVQITRPTGRPRTPTTQTTKRPRWVVGGTTILTFVALLYLVELIDQLSGSRLDVNGIRPLKTDGLWGVIFAPLLHANWHHLMANTIPLLVLGFLMTLAGLSRFVWATAIIWILGGLGTWLIGNVGSSCGPTDHIGASGLIFGWLAFLLVFGLFVRKGWDIVIGLVVLFVYGGILLGAMPVLGQCGGVSWQGHLSGAVAGVVAAYLLSAPERKARALKRAGARSGHPKL.

The segment covering 1–11 (MGMTPRRKRRG) has biased composition (basic residues). Residues 1 to 32 (MGMTPRRKRRGGAVQITRPTGRPRTPTTQTTK) form a disordered region. Positions 17-31 (TRPTGRPRTPTTQTT) are enriched in low complexity. Helical transmembrane passes span 36–56 (WVVG…VELI), 93–113 (LMAN…AGLS), 115–135 (FVWA…LIGN), 146–166 (IGAS…GLFV), 172–192 (IVIG…AMPV), and 198–218 (GVSW…AYLL).

It to M.leprae ML1171.

Its subcellular location is the cell membrane. This is an uncharacterized protein from Mycobacterium tuberculosis (strain CDC 1551 / Oshkosh).